Reading from the N-terminus, the 372-residue chain is 4-hydroxy-3-methylbut-2-en-1-yl diphosphate synthase (flavodoxin) (372 aa).

Positions 270, 273, 305, and 312 each coordinate [4Fe-4S] cluster.

The protein belongs to the IspG family. Requires [4Fe-4S] cluster as cofactor.

It carries out the reaction (2E)-4-hydroxy-3-methylbut-2-enyl diphosphate + oxidized [flavodoxin] + H2O + 2 H(+) = 2-C-methyl-D-erythritol 2,4-cyclic diphosphate + reduced [flavodoxin]. It functions in the pathway isoprenoid biosynthesis; isopentenyl diphosphate biosynthesis via DXP pathway; isopentenyl diphosphate from 1-deoxy-D-xylulose 5-phosphate: step 5/6. Converts 2C-methyl-D-erythritol 2,4-cyclodiphosphate (ME-2,4cPP) into 1-hydroxy-2-methyl-2-(E)-butenyl 4-diphosphate. This is 4-hydroxy-3-methylbut-2-en-1-yl diphosphate synthase (flavodoxin) from Aliivibrio salmonicida (strain LFI1238) (Vibrio salmonicida (strain LFI1238)).